Reading from the N-terminus, the 129-residue chain is Small ribosomal subunit protein uS11 (129 aa).

It belongs to the universal ribosomal protein uS11 family. As to quaternary structure, part of the 30S ribosomal subunit. Interacts with proteins S7 and S18. Binds to IF-3.

Functionally, located on the platform of the 30S subunit, it bridges several disparate RNA helices of the 16S rRNA. Forms part of the Shine-Dalgarno cleft in the 70S ribosome. This Bacillus cereus (strain ATCC 14579 / DSM 31 / CCUG 7414 / JCM 2152 / NBRC 15305 / NCIMB 9373 / NCTC 2599 / NRRL B-3711) protein is Small ribosomal subunit protein uS11.